A 354-amino-acid chain; its full sequence is Polyribonucleotide 5'-hydroxyl-kinase PYRAB01840 (354 aa).

Position 36–43 (36–43 (GDVDTGKT)) interacts with ATP.

It depends on a divalent metal cation as a cofactor.

It catalyses the reaction a 5'-end dephospho-2'-deoxyribonucleoside-DNA + ATP = a 5'-end 5'-phospho-2'-deoxyribonucleoside-DNA + ADP + H(+). The catalysed reaction is a 5'-end dephospho-ribonucleoside-RNA + ATP = a 5'-end 5'-phospho-ribonucleoside-RNA + ADP + H(+). Its function is as follows. Polynucleotide kinase that can phosphorylate the 5'-hydroxyl groups of both single-stranded RNA (ssRNA) and single-stranded DNA (ssDNA). Exhibits a strong preference for ssRNA. This chain is Polyribonucleotide 5'-hydroxyl-kinase PYRAB01840, found in Pyrococcus abyssi (strain GE5 / Orsay).